The sequence spans 373 residues: Histidinol-phosphate aminotransferase (373 aa).

N6-(pyridoxal phosphate)lysine is present on K231.

It belongs to the class-II pyridoxal-phosphate-dependent aminotransferase family. Histidinol-phosphate aminotransferase subfamily. Pyridoxal 5'-phosphate is required as a cofactor.

It catalyses the reaction L-histidinol phosphate + 2-oxoglutarate = 3-(imidazol-4-yl)-2-oxopropyl phosphate + L-glutamate. It participates in amino-acid biosynthesis; L-histidine biosynthesis; L-histidine from 5-phospho-alpha-D-ribose 1-diphosphate: step 7/9. The polypeptide is Histidinol-phosphate aminotransferase (hisC) (Methanocaldococcus jannaschii (strain ATCC 43067 / DSM 2661 / JAL-1 / JCM 10045 / NBRC 100440) (Methanococcus jannaschii)).